The primary structure comprises 244 residues: MPRPSPCADSGGGMMTTLTARPEAITFDPQQSALIVVDMQNAYATPGGYLDLAGFDVSTTRPVIANIQTAVTAARAAGMLIIWFQNGWDEQYVEAGGPGSPNFHKSNALKTMRKQPQLQGKLLAKGSWDYQLVDELVPQPGDIVLPKPRYSGFFNTPLDSILRSRGIRHLVFTGIATNVCVESTLRDGFFLEYFGVVLEDATHQAGPEFAQKAALFNIETFFGWVSDVETFCDALSPTSFARIA.

Residue D38 is the Proton acceptor of the active site. K147 is an active-site residue. C180 (nucleophile) is an active-site residue.

This sequence belongs to the isochorismatase family. RutB subfamily.

The catalysed reaction is (Z)-3-ureidoacrylate + H2O + H(+) = (Z)-3-aminoacrylate + NH4(+) + CO2. It carries out the reaction (Z)-3-ureidoacrylate + H2O = (Z)-3-aminoacrylate + carbamate + H(+). It catalyses the reaction (Z)-2-methylureidoacrylate + H2O + H(+) = (Z)-2-methylaminoacrylate + NH4(+) + CO2. In terms of biological role, hydrolyzes ureidoacrylate to form aminoacrylate and carbamate. The carbamate hydrolyzes spontaneously, thereby releasing one of the nitrogen atoms of the pyrimidine ring as ammonia and one of its carbon atoms as CO2. This is Ureidoacrylate amidohydrolase RutB from Shigella sonnei (strain Ss046).